Consider the following 342-residue polypeptide: Global transcription regulator FGP1 (342 aa).

Positions Phe-91–Tyr-113 are disordered.

It belongs to the MIT1/WOR1 family.

The protein resides in the nucleus. Functionally, global transcriptional regulator of pathogenicity. Regulates many genes during growth in putrescine medium and during infection. Involved in the developmental processes of conidium formation and sexual reproduction and modulates a morphological change that accompanies mycotoxin production. The protein is Global transcription regulator FGP1 of Gibberella zeae (strain ATCC MYA-4620 / CBS 123657 / FGSC 9075 / NRRL 31084 / PH-1) (Wheat head blight fungus).